A 730-amino-acid polypeptide reads, in one-letter code: Elongation factor 2 (730 aa).

The region spanning 19–260 (QRIRNIGIVA…MVIHFLPNPL (242 aa)) is the tr-type G domain. Residues 28–35 (AHIDHGKT), 94–98 (DTPGH), and 148–151 (NKVD) each bind GTP. Diphthamide is present on H596.

Belongs to the TRAFAC class translation factor GTPase superfamily. Classic translation factor GTPase family. EF-G/EF-2 subfamily.

The protein localises to the cytoplasm. Its function is as follows. Catalyzes the GTP-dependent ribosomal translocation step during translation elongation. During this step, the ribosome changes from the pre-translocational (PRE) to the post-translocational (POST) state as the newly formed A-site-bound peptidyl-tRNA and P-site-bound deacylated tRNA move to the P and E sites, respectively. Catalyzes the coordinated movement of the two tRNA molecules, the mRNA and conformational changes in the ribosome. The polypeptide is Elongation factor 2 (Methanosarcina mazei (strain ATCC BAA-159 / DSM 3647 / Goe1 / Go1 / JCM 11833 / OCM 88) (Methanosarcina frisia)).